We begin with the raw amino-acid sequence, 298 residues long: HTH-type transcriptional regulator ArgP (298 aa).

One can recognise an HTH lysR-type domain in the interval valine 4–threonine 60. A DNA-binding region (H-T-H motif) is located at residues phenylalanine 21 to lysine 40.

It belongs to the LysR transcriptional regulatory family. As to quaternary structure, homodimer.

In terms of biological role, controls the transcription of genes involved in arginine and lysine metabolism. This chain is HTH-type transcriptional regulator ArgP, found in Photobacterium profundum (strain SS9).